The primary structure comprises 318 residues: C1GALT1-specific chaperone 1 (318 aa).

Residues 1–6 (MLSESS) are Cytoplasmic-facing. Residues 7-26 (SFLKGVMLGSIFCALITMLG) form a helical; Signal-anchor for type II membrane protein membrane-spanning segment. The Lumenal portion of the chain corresponds to 27 to 318 (HIRIGHGNRM…FLPPNGSDND (292 aa)).

The protein belongs to the glycosyltransferase 31 family. Beta3-Gal-T subfamily. In terms of assembly, associates with core 1 beta-3-galactosyltransferase (C1GALT1), probably not with the soluble active form. Ubiquitously expressed. Abundantly expressed in salivary gland, stomach, small intestine, kidney, and testis and at intermediate levels in whole brain, cerebellum, spinal cord, thymus, spleen, trachea, lung, pancreas, ovary, and uterus.

The protein localises to the membrane. Its function is as follows. Probable chaperone required for the generation of 1 O-glycan Gal-beta1-3GalNAc-alpha1-Ser/Thr (T antigen), which is a precursor for many extended O-glycans in glycoproteins. Probably acts as a specific molecular chaperone assisting the folding/stability of core 1 beta-3-galactosyltransferase (C1GALT1). The chain is C1GALT1-specific chaperone 1 (C1GALT1C1) from Homo sapiens (Human).